Reading from the N-terminus, the 148-residue chain is UPAR/Ly6 domain-containing protein bero (148 aa).

The N-terminal stretch at 1–23 is a signal peptide; it reads MVSALKCSLAVAVMISLACSAYA. Intrachain disulfides connect cysteine 26/cysteine 72, cysteine 29/cysteine 37, cysteine 51/cysteine 90, cysteine 102/cysteine 116, and cysteine 119/cysteine 124. A glycan (N-linked (GlcNAc...) asparagine) is linked at asparagine 68. N-linked (GlcNAc...) asparagine glycosylation occurs at asparagine 125. Residue asparagine 125 is the site of GPI-anchor amidated asparagine attachment. The propeptide at 126–148 is removed in mature form; it reads GSSSLAPIAGAILLFFGVARLLA. Residues 128 to 148 form a helical membrane-spanning segment; it reads SSLAPIAGAILLFFGVARLLA.

This sequence belongs to the quiver family.

Its subcellular location is the cell membrane. The protein resides in the membrane. The protein localises to the perikaryon. It is found in the cell projection. It localises to the neuron projection. Necessary for the maintenance of persistent fluctuating activities and suppression of acute evoked activities in abdominal leucokinin-producing (ABLK) neurons to negatively regulate neuron excitability involved in nociceptive (perception of pain) behavioral responses. This Drosophila melanogaster (Fruit fly) protein is UPAR/Ly6 domain-containing protein bero.